A 339-amino-acid polypeptide reads, in one-letter code: tRNA N6-adenosine threonylcarbamoyltransferase (339 aa).

The Fe cation site is built by His111 and His115. Residues 134–138 (LVSGG), Asp167, Gly180, and Asn272 each bind substrate. Asp300 contributes to the Fe cation binding site.

The protein belongs to the KAE1 / TsaD family. Requires Fe(2+) as cofactor.

The protein resides in the cytoplasm. It carries out the reaction L-threonylcarbamoyladenylate + adenosine(37) in tRNA = N(6)-L-threonylcarbamoyladenosine(37) in tRNA + AMP + H(+). Its function is as follows. Required for the formation of a threonylcarbamoyl group on adenosine at position 37 (t(6)A37) in tRNAs that read codons beginning with adenine. Is involved in the transfer of the threonylcarbamoyl moiety of threonylcarbamoyl-AMP (TC-AMP) to the N6 group of A37, together with TsaE and TsaB. TsaD likely plays a direct catalytic role in this reaction. This Vibrio cholerae serotype O1 (strain ATCC 39541 / Classical Ogawa 395 / O395) protein is tRNA N6-adenosine threonylcarbamoyltransferase.